Here is a 378-residue protein sequence, read N- to C-terminus: Putative glutamate--cysteine ligase 2 (378 aa).

The protein belongs to the glutamate--cysteine ligase type 2 family. YbdK subfamily.

The enzyme catalyses L-cysteine + L-glutamate + ATP = gamma-L-glutamyl-L-cysteine + ADP + phosphate + H(+). ATP-dependent carboxylate-amine ligase which exhibits weak glutamate--cysteine ligase activity. In Jannaschia sp. (strain CCS1), this protein is Putative glutamate--cysteine ligase 2.